The sequence spans 230 residues: Large ribosomal subunit protein uL1 (230 aa).

The protein belongs to the universal ribosomal protein uL1 family. As to quaternary structure, part of the 50S ribosomal subunit.

Its function is as follows. Binds directly to 23S rRNA. The L1 stalk is quite mobile in the ribosome, and is involved in E site tRNA release. Protein L1 is also a translational repressor protein, it controls the translation of the L11 operon by binding to its mRNA. This chain is Large ribosomal subunit protein uL1, found in Chromohalobacter salexigens (strain ATCC BAA-138 / DSM 3043 / CIP 106854 / NCIMB 13768 / 1H11).